The chain runs to 185 residues: Guanosine deaminase (185 aa).

In terms of domain architecture, CMP/dCMP-type deaminase spans 28–142; it reads DSDHKFLTQA…AAIAIGFDDF (115 aa). His80 contacts Zn(2+). The active-site Proton donor is Glu82. Zn(2+)-binding residues include Cys110 and Cys113.

Belongs to the cytidine and deoxycytidylate deaminase family. Expressed in roots, leaves, flowers and siliques.

It localises to the cytoplasm. It is found in the nucleus. The catalysed reaction is guanosine + H2O + H(+) = xanthosine + NH4(+). Functionally, catalyzes the hydrolytic deamination of guanosine, producing xanthosine and ammonia. Deaminates exclusively guanosine and 2'-deoxyguanosine but no other aminated purines, pyrimidines, or pterines. Deamination of guanosine by GSDA is the only source of xanthosine production in Arabidopsis. The protein is Guanosine deaminase of Arabidopsis thaliana (Mouse-ear cress).